The primary structure comprises 315 residues: MAKSQIALCCMSHSPLLNLPGPAQELLDEIDKAIAAARDFVAEFDPELVVTFSPDHYNGFFYRAMPPFCIGTAAEGVGDYGTHEGPLDVPSDLATDCARAVLDHDVDVALSAAMDVDHGTVQPLQKLFGDATAKPVIPVFINSVATPLGPIRRVRALGAAVGAHLATLGKRVLVIGSGGLSHDPPVPTLATAPPAALDRIVRGVPMTTDQRQARQTAVIEAAREFASGRGTLAPLNPDWDRAFLDIVDSGRLAEVDGWDNGWIAEQAGNSAHEVRTWIAAFAALAAQGEYVTENRFYRAAPELIAGFAIRTAVTT.

H118 functions as the Proton donor in the catalytic mechanism. Catalysis depends on H182, which acts as the Proton acceptor.

It belongs to the LigB/MhpB extradiol dioxygenase family. As to quaternary structure, homotetramer. Fe(2+) serves as cofactor.

The catalysed reaction is 3-(2,3-dihydroxyphenyl)propanoate + O2 = (2Z,4E)-2-hydroxy-6-oxonona-2,4-dienedioate + H(+). The enzyme catalyses (2E)-3-(2,3-dihydroxyphenyl)prop-2-enoate + O2 = (2Z,4E,7E)-2-hydroxy-6-oxonona-2,4,7-trienedioate + H(+). The protein operates within aromatic compound metabolism; 3-phenylpropanoate degradation. In terms of biological role, catalyzes the non-heme iron(II)-dependent oxidative cleavage of 2,3-dihydroxyphenylpropionic acid and 2,3-dihydroxicinnamic acid into 2-hydroxy-6-ketononadienedioate and 2-hydroxy-6-ketononatrienedioate, respectively. In Mycolicibacterium gilvum (strain PYR-GCK) (Mycobacterium gilvum (strain PYR-GCK)), this protein is 2,3-dihydroxyphenylpropionate/2,3-dihydroxicinnamic acid 1,2-dioxygenase.